Consider the following 393-residue polypeptide: NAD(P)H-quinone oxidoreductase subunit H, chloroplastic (393 aa).

Belongs to the complex I 49 kDa subunit family. As to quaternary structure, NDH is composed of at least 16 different subunits, 5 of which are encoded in the nucleus.

Its subcellular location is the plastid. The protein localises to the chloroplast thylakoid membrane. It carries out the reaction a plastoquinone + NADH + (n+1) H(+)(in) = a plastoquinol + NAD(+) + n H(+)(out). It catalyses the reaction a plastoquinone + NADPH + (n+1) H(+)(in) = a plastoquinol + NADP(+) + n H(+)(out). Functionally, NDH shuttles electrons from NAD(P)H:plastoquinone, via FMN and iron-sulfur (Fe-S) centers, to quinones in the photosynthetic chain and possibly in a chloroplast respiratory chain. The immediate electron acceptor for the enzyme in this species is believed to be plastoquinone. Couples the redox reaction to proton translocation, and thus conserves the redox energy in a proton gradient. The polypeptide is NAD(P)H-quinone oxidoreductase subunit H, chloroplastic (Gossypium hirsutum (Upland cotton)).